A 125-amino-acid polypeptide reads, in one-letter code: Large ribosomal subunit protein bL20 (125 aa).

Belongs to the bacterial ribosomal protein bL20 family.

Its function is as follows. Binds directly to 23S ribosomal RNA and is necessary for the in vitro assembly process of the 50S ribosomal subunit. It is not involved in the protein synthesizing functions of that subunit. This chain is Large ribosomal subunit protein bL20, found in Methylobacterium nodulans (strain LMG 21967 / CNCM I-2342 / ORS 2060).